Reading from the N-terminus, the 271-residue chain is 3-methyl-2-oxobutanoate hydroxymethyltransferase (271 aa).

2 residues coordinate Mg(2+): D51 and D90. Residues 51 to 52 (DS), D90, and K118 each bind 3-methyl-2-oxobutanoate. Mg(2+) is bound at residue E120. E186 (proton acceptor) is an active-site residue.

Belongs to the PanB family. As to quaternary structure, homodecamer; pentamer of dimers. Mg(2+) is required as a cofactor.

Its subcellular location is the cytoplasm. The catalysed reaction is 3-methyl-2-oxobutanoate + (6R)-5,10-methylene-5,6,7,8-tetrahydrofolate + H2O = 2-dehydropantoate + (6S)-5,6,7,8-tetrahydrofolate. It participates in cofactor biosynthesis; (R)-pantothenate biosynthesis; (R)-pantoate from 3-methyl-2-oxobutanoate: step 1/2. Catalyzes the reversible reaction in which hydroxymethyl group from 5,10-methylenetetrahydrofolate is transferred onto alpha-ketoisovalerate to form ketopantoate. This is 3-methyl-2-oxobutanoate hydroxymethyltransferase from Xanthomonas campestris pv. campestris (strain 8004).